The primary structure comprises 216 residues: Guanylate kinase (216 aa).

Residues 11-189 (GVLIVISGPS…AVKKIEAILL (179 aa)) enclose the Guanylate kinase-like domain. ATP is bound at residue 18–25 (GPSGAGKG).

The protein belongs to the guanylate kinase family.

It localises to the cytoplasm. The catalysed reaction is GMP + ATP = GDP + ADP. Essential for recycling GMP and indirectly, cGMP. The polypeptide is Guanylate kinase (Clostridium perfringens (strain ATCC 13124 / DSM 756 / JCM 1290 / NCIMB 6125 / NCTC 8237 / Type A)).